The sequence spans 125 residues: Large ribosomal subunit protein bL12 (125 aa).

The protein belongs to the bacterial ribosomal protein bL12 family. In terms of assembly, homodimer. Part of the ribosomal stalk of the 50S ribosomal subunit. Forms a multimeric L10(L12)X complex, where L10 forms an elongated spine to which 2 to 4 L12 dimers bind in a sequential fashion. Binds GTP-bound translation factors.

Forms part of the ribosomal stalk which helps the ribosome interact with GTP-bound translation factors. Is thus essential for accurate translation. In Hyphomonas neptunium (strain ATCC 15444), this protein is Large ribosomal subunit protein bL12.